The sequence spans 703 residues: Fibulin-1 (703 aa).

Positions 1–29 are cleaved as a signal peptide; sequence MERAAPSRRVPLPLLLLGGLALLAAGVDA. 35 disulfide bridges follow: Cys-36-Cys-61, Cys-37-Cys-68, Cys-50-Cys-69, Cys-78-Cys-109, Cys-91-Cys-110, Cys-112-Cys-136, Cys-113-Cys-143, Cys-126-Cys-144, Cys-180-Cys-190, Cys-186-Cys-199, Cys-201-Cys-214, Cys-220-Cys-233, Cys-227-Cys-242, Cys-248-Cys-260, Cys-266-Cys-279, Cys-273-Cys-288, Cys-294-Cys-306, Cys-312-Cys-325, Cys-319-Cys-334, Cys-341-Cys-354, Cys-360-Cys-373, Cys-367-Cys-382, Cys-384-Cys-397, Cys-403-Cys-415, Cys-411-Cys-424, Cys-426-Cys-439, Cys-445-Cys-454, Cys-450-Cys-463, Cys-465-Cys-479, Cys-485-Cys-498, Cys-494-Cys-507, Cys-509-Cys-523, Cys-529-Cys-542, Cys-536-Cys-551, and Cys-556-Cys-577. Anaphylatoxin-like domains follow at residues 36-76, 77-111, and 112-144; these read CCAD…LEEL, HCAT…RCCH, and CCLL…QACC. Asn-98 carries N-linked (GlcNAc...) (complex) asparagine glycosylation. An EGF-like 1 domain is found at 176–215; the sequence is LNDRCRGGGPCKQQCRDTGDEVVCSCFVGYQLLSDGVSCE. The EGF-like 2; calcium-binding domain occupies 216–261; the sequence is DVNECITGSHSCRLGESCINTVGSFRCQRDSSCGTGYELTEDNSCK. The 46-residue stretch at 262 to 307 folds into the EGF-like 3; calcium-binding domain; that stretch reads DIDECESGIHNCLPDFICQNTLGSFRCRPKLQCKSGFIQDALGNCI. The EGF-like 4; calcium-binding domain maps to 308–355; sequence DINECLSISAPCPIGHTCINTEGSYTCQKNVPNCGRGYHLNEEGTRCV. The region spanning 356–398 is the EGF-like 5; calcium-binding domain; that stretch reads DVDECAPPAEPCGKGHRCVNSPGSFRCECKTGYYFDGISRMCV. The interval 356 to 440 is self-association and FN1-binding; calcium is necessary for homotypic binding, but not for heterotypic binding; that stretch reads DVDECAPPAE…RLSVDGRSCE (85 aa). The 42-residue stretch at 399-440 folds into the EGF-like 6; calcium-binding domain; that stretch reads DVNECQRYPGRLCGHKCENTLGSYLCSCSVGFRLSVDGRSCE. Residues 441 to 480 enclose the EGF-like 7; calcium-binding domain; sequence DINECSSSPCSQECANVYGSYQCYCRRGYQLSDVDGVTCE. The 44-residue stretch at 481–524 folds into the EGF-like 8; calcium-binding domain; the sequence is DIDECALPTGGHICSYRCINIPGSFQCSCPSSGYRLAPNGRNCQ. An EGF-like 9; calcium-binding domain is found at 525 to 578; the sequence is DIDECVTGIHNCSINETCFNIQGGFRCLAFECPENYRRSAATLQQEKTDTVRCI. 2 N-linked (GlcNAc...) asparagine glycosylation sites follow: Asn-535 and Asn-539.

Belongs to the fibulin family. Homomultimerizes and interacts with various extracellular matrix components such as FN1, LAMA1, LAMA2, NID, ACAN, CSPG2 and type IV collagen. Also interacts with APP and FGB. Interacts with FBLN7. Interacts with CCN3. As to quaternary structure, (Microbial infection) Interacts with human papillomavirus/HPV type 16, 18 and 31 proteins E6. In terms of tissue distribution, isoform A and isoform B are only expressed in placenta. Isoform C and isoform D are expressed in a variety of tissues and cultured cells.

It is found in the secreted. The protein resides in the extracellular space. Its subcellular location is the extracellular matrix. Incorporated into fibronectin-containing matrix fibers. May play a role in cell adhesion and migration along protein fibers within the extracellular matrix (ECM). Could be important for certain developmental processes and contribute to the supramolecular organization of ECM architecture, in particular to those of basement membranes. Has been implicated in a role in cellular transformation and tumor invasion, it appears to be a tumor suppressor. May play a role in haemostasis and thrombosis owing to its ability to bind fibrinogen and incorporate into clots. Could play a significant role in modulating the neurotrophic activities of APP, particularly soluble APP. The chain is Fibulin-1 (FBLN1) from Homo sapiens (Human).